The following is a 482-amino-acid chain: Glutamyl-tRNA(Gln) amidotransferase subunit A (482 aa).

Catalysis depends on charge relay system residues K75 and S150. S174 (acyl-ester intermediate) is an active-site residue.

This sequence belongs to the amidase family. GatA subfamily. As to quaternary structure, heterotrimer of A, B and C subunits.

The catalysed reaction is L-glutamyl-tRNA(Gln) + L-glutamine + ATP + H2O = L-glutaminyl-tRNA(Gln) + L-glutamate + ADP + phosphate + H(+). In terms of biological role, allows the formation of correctly charged Gln-tRNA(Gln) through the transamidation of misacylated Glu-tRNA(Gln) in organisms which lack glutaminyl-tRNA synthetase. The reaction takes place in the presence of glutamine and ATP through an activated gamma-phospho-Glu-tRNA(Gln). The sequence is that of Glutamyl-tRNA(Gln) amidotransferase subunit A from Deinococcus radiodurans (strain ATCC 13939 / DSM 20539 / JCM 16871 / CCUG 27074 / LMG 4051 / NBRC 15346 / NCIMB 9279 / VKM B-1422 / R1).